We begin with the raw amino-acid sequence, 168 residues long: Cytochrome c oxidase subunit 2 (168 aa).

Residues 1 to 3 (MVD) lie on the Cytoplasmic side of the membrane. Residues 4–38 (EHKAHKAILAYEKGWLAFSLAMLFVFIALIAYTLA) traverse the membrane as a helical segment. Residues 39-168 (THTAGVIPAG…NMFGTIVVKE (130 aa)) lie on the Periplasmic side of the membrane. Cu cation-binding residues include histidine 114, cysteine 149, cysteine 153, and histidine 157.

Belongs to the cytochrome c oxidase subunit 2 family.

It is found in the cell membrane. It catalyses the reaction 4 Fe(II)-[cytochrome c] + O2 + 8 H(+)(in) = 4 Fe(III)-[cytochrome c] + 2 H2O + 4 H(+)(out). In terms of biological role, subunits I and II form the functional core of the enzyme complex. Electrons originating in cytochrome c are transferred via heme a and Cu(A) to the binuclear center formed by heme a3 and Cu(B). In Thermus thermophilus (strain ATCC 27634 / DSM 579 / HB8), this protein is Cytochrome c oxidase subunit 2 (cbaB).